The chain runs to 107 residues: Phosphoribosyl-ATP pyrophosphatase (107 aa).

This sequence belongs to the PRA-PH family.

It is found in the cytoplasm. It catalyses the reaction 1-(5-phospho-beta-D-ribosyl)-ATP + H2O = 1-(5-phospho-beta-D-ribosyl)-5'-AMP + diphosphate + H(+). It functions in the pathway amino-acid biosynthesis; L-histidine biosynthesis; L-histidine from 5-phospho-alpha-D-ribose 1-diphosphate: step 2/9. In Bacillus anthracis (strain A0248), this protein is Phosphoribosyl-ATP pyrophosphatase.